Here is a 232-residue protein sequence, read N- to C-terminus: MGQKINPIGLRLGINRTWDSRWFAGKNEYGKLLHEDVKIRAILHKELKQAAVARIVIERPHKKCRVTIHSARPGVVIGKKGADIDKLRKKVADITASDVVINIVEIRKPELDATLVAESIAQQLERRVAFRRAMKRAVQSAMRLGAEGIRINCSGRLGGAEIARMEWYREGRVPLHTLRADIDYGVATAFTTFGTCGVKVWIFKGEILEHDPMAQDKRMAEGDNSRPRRDAA.

The KH type-2 domain occupies 39-107 (IRAILHKELK…DVVINIVEIR (69 aa)).

Belongs to the universal ribosomal protein uS3 family. In terms of assembly, part of the 30S ribosomal subunit. Forms a tight complex with proteins S10 and S14.

In terms of biological role, binds the lower part of the 30S subunit head. Binds mRNA in the 70S ribosome, positioning it for translation. The protein is Small ribosomal subunit protein uS3 of Rhodopseudomonas palustris (strain BisA53).